A 312-amino-acid chain; its full sequence is MAQQGQGSMDPAVLDDIIRRLLDYRNPKAGTKQAMLNDSEIRQLCFVSREIFLQQPCLLELAAPVKICGDIHGQYSDLLRLFEYGGFPPAANYLFLGDYVDRGKQSLETICLLLAYKIKYPENFFLLRGNHECASINRIYGFYDECKRRFNVKLWKVFTDTFNCLPVAAVIDEKILCMHGGLSPELINVEQIKNIERPTDVPDAGLLCDLLWSDPSKDVKGWGMNDRGVSYTFGADKVAEFLIKNDMDLVCRAHQVVEDGYEFFADRQLVTMFSAPNYCGEFDNAGALMSVDESLMCSFQILKPVDRRSRFF.

Position 2 is an N-acetylalanine (A2). The Mn(2+) site is built by D70, H72, D98, and N130. H131 functions as the Proton donor in the catalytic mechanism. Residues H179 and H254 each contribute to the Mn(2+) site.

It belongs to the PPP phosphatase family. PP-1 subfamily. Mn(2+) is required as a cofactor.

It is found in the nucleus. The protein localises to the cytoplasm. It catalyses the reaction O-phospho-L-seryl-[protein] + H2O = L-seryl-[protein] + phosphate. It carries out the reaction O-phospho-L-threonyl-[protein] + H2O = L-threonyl-[protein] + phosphate. Phosphatase activity is strongly reduced by the protein phosphatase inhibitor 2 (I-2). In terms of biological role, serine/threonine-protein phosphatase that possesses phosphatase activity toward para-nitrophenyl phosphate (pNPP) in vitro. The sequence is that of Serine/threonine-protein phosphatase PP1 isozyme 5 from Arabidopsis thaliana (Mouse-ear cress).